The sequence spans 142 residues: Large ribosomal subunit protein uL13 (142 aa).

Belongs to the universal ribosomal protein uL13 family. In terms of assembly, part of the 50S ribosomal subunit.

In terms of biological role, this protein is one of the early assembly proteins of the 50S ribosomal subunit, although it is not seen to bind rRNA by itself. It is important during the early stages of 50S assembly. The chain is Large ribosomal subunit protein uL13 from Polynucleobacter asymbioticus (strain DSM 18221 / CIP 109841 / QLW-P1DMWA-1) (Polynucleobacter necessarius subsp. asymbioticus).